Reading from the N-terminus, the 248-residue chain is 5'-nucleotidase SurE (248 aa).

Residues Asp8, Asp9, Ser39, and Asn91 each coordinate a divalent metal cation.

The protein belongs to the SurE nucleotidase family. A divalent metal cation is required as a cofactor.

The protein localises to the cytoplasm. The catalysed reaction is a ribonucleoside 5'-phosphate + H2O = a ribonucleoside + phosphate. Nucleotidase that shows phosphatase activity on nucleoside 5'-monophosphates. In Neisseria gonorrhoeae (strain ATCC 700825 / FA 1090), this protein is 5'-nucleotidase SurE.